The following is an 82-amino-acid chain: RNA-binding protein KhpA (82 aa).

Positions 35 to 82 (STILELRVSQSDVGKIIGRRGRIARAIRTLLGACAAKTNRRVQLEILD) constitute a KH domain.

Belongs to the KhpA RNA-binding protein family. As to quaternary structure, forms a complex with KhpB.

The protein resides in the cytoplasm. Its function is as follows. A probable RNA chaperone. Forms a complex with KhpB which binds to cellular RNA and controls its expression. Plays a role in peptidoglycan (PG) homeostasis and cell length regulation. The protein is RNA-binding protein KhpA of Borreliella burgdorferi (strain ATCC 35210 / DSM 4680 / CIP 102532 / B31) (Borrelia burgdorferi).